We begin with the raw amino-acid sequence, 125 residues long: Cysteine proteinase inhibitor 3 (125 aa).

An N-terminal signal peptide occupies residues 1 to 22; it reads MESKTFWIVTLLLCGTIQLAIC. The region spanning 36–124 is the Cystatin domain; the sequence is GGVHDLRGNQ…KQLQEFKESS (89 aa). Residues 80–84 carry the Secondary area of contact motif; that stretch reads QVVAG.

This sequence belongs to the cystatin family. Phytocystatin subfamily.

It is found in the secreted. Functionally, specific inhibitor of cysteine proteinases. Probably involved in the regulation of endogenous processes and in defense against pests and pathogens. The polypeptide is Cysteine proteinase inhibitor 3 (CYS3) (Arabidopsis thaliana (Mouse-ear cress)).